Reading from the N-terminus, the 787-residue chain is Lon protease (787 aa).

A Lon N-terminal domain is found at 12–210 (LPLIPLRGLA…LIYSILLEEI (199 aa)). 362–369 (GPPGTGKT) serves as a coordination point for ATP. The region spanning 599-780 (NPQIGLVNGL…DEVLEQALLK (182 aa)) is the Lon proteolytic domain. Residues Ser686 and Lys729 contribute to the active site.

This sequence belongs to the peptidase S16 family. In terms of assembly, homohexamer. Organized in a ring with a central cavity.

Its subcellular location is the cytoplasm. The catalysed reaction is Hydrolysis of proteins in presence of ATP.. ATP-dependent serine protease that mediates the selective degradation of mutant and abnormal proteins as well as certain short-lived regulatory proteins. Required for cellular homeostasis and for survival from DNA damage and developmental changes induced by stress. Degrades polypeptides processively to yield small peptide fragments that are 5 to 10 amino acids long. Binds to DNA in a double-stranded, site-specific manner. The sequence is that of Lon protease from Clostridioides difficile (strain 630) (Peptoclostridium difficile).